The chain runs to 364 residues: tRNA-specific 2-thiouridylase MnmA 1 (364 aa).

Residues 10-17 and methionine 36 contribute to the ATP site; that span reads GMSGGVDS. The Nucleophile role is filled by cysteine 106. A disulfide bridge links cysteine 106 with cysteine 204. Glycine 130 is a binding site for ATP. Residues 154–156 are interaction with tRNA; that stretch reads KDQ. Cysteine 204 functions as the Cysteine persulfide intermediate in the catalytic mechanism. The tract at residues 310–311 is interaction with tRNA; the sequence is RY.

The protein belongs to the MnmA/TRMU family.

The protein resides in the cytoplasm. It catalyses the reaction S-sulfanyl-L-cysteinyl-[protein] + uridine(34) in tRNA + AH2 + ATP = 2-thiouridine(34) in tRNA + L-cysteinyl-[protein] + A + AMP + diphosphate + H(+). Its function is as follows. Catalyzes the 2-thiolation of uridine at the wobble position (U34) of tRNA, leading to the formation of s(2)U34. The sequence is that of tRNA-specific 2-thiouridylase MnmA 1 from Caldanaerobacter subterraneus subsp. tengcongensis (strain DSM 15242 / JCM 11007 / NBRC 100824 / MB4) (Thermoanaerobacter tengcongensis).